The primary structure comprises 1346 residues: Toll-like receptor Tollo (1346 aa).

The first 21 residues, 1 to 21 (MLATTHMLYVLIATCVIPIFG), serve as a signal peptide directing secretion. At 22 to 1021 (AALSKTVLYQ…NQPPKLDYIP (1000 aa)) the chain is on the extracellular side. N-linked (GlcNAc...) asparagine glycans are attached at residues Asn-63, Asn-112, and Asn-126. LRR repeat units lie at residues 97–120 (LVEL…SFRG), 124–146 (LRNL…MASN), 151–174 (FRQL…MVCP), 176–198 (KSLQ…YFSA), 209–232 (GSTL…MLSA), 234–256 (GRLT…AFEG), 257–280 (LLSL…LFAE), 282–304 (KQLQ…IFGE), 306–330 (AELL…TFVG), 331–354 (LKRL…IFRP), 355–378 (LASL…IFAD), 380–402 (TNLH…TLQG), 404–426 (KNLL…SLVN), 427–450 (CSQL…LAHV), 452–473 (LLKT…SITQ), 474–497 (LESL…VFDR), 498–521 (MSSL…SLQR), 523–544 (SQLQ…LFTE), 546–568 (PNLV…HIPI), 570–591 (LQWL…EIES), 593–614 (LSLS…SSIP), 615–637 (NSVE…TFFK), and 638–661 (KPNL…ALRL). N-linked (GlcNAc...) asparagine glycosylation occurs at Asn-182. Asn-291 is a glycosylation site (N-linked (GlcNAc...) asparagine). N-linked (GlcNAc...) asparagine glycosylation is present at Asn-426. Residue Asn-468 is glycosylated (N-linked (GlcNAc...) asparagine). N-linked (GlcNAc...) asparagine glycosylation occurs at Asn-505. The N-linked (GlcNAc...) asparagine glycan is linked to Asn-552. N-linked (GlcNAc...) asparagine glycosylation occurs at Asn-640. Disulfide bonds link Cys-682–Cys-710, Cys-684–Cys-733, Cys-757–Cys-763, and Cys-761–Cys-776. LRR repeat units follow at residues 790–813 (PMDS…AFIG), 814–837 (RKRL…TFYG), 838–861 (LLEL…EFQG), 863–885 (DNLQ…TFTH), 887–909 (YHLK…NFLP), and 912–938 (LNEL…YINR). N-linked (GlcNAc...) asparagine glycans are attached at residues Asn-823 and Asn-832. Cys-924 and Cys-950 form a disulfide bridge. Asn-956 and Asn-1000 each carry an N-linked (GlcNAc...) asparagine glycan. Residues 1022-1042 (ILVAILTAFIFVMICISLVFI) form a helical membrane-spanning segment. At 1043-1346 (FRQEMRVWCH…PTPASRNLHM (304 aa)) the chain is on the cytoplasmic side. The region spanning 1074–1209 (KLFDAFVSYS…LFWQKLRFAL (136 aa)) is the TIR domain. The interval 1235-1346 (HHHHHVHQQA…PTPASRNLHM (112 aa)) is disordered. Positions 1267-1300 (PGSFRRQPSLHQQQQQQQQIRGNNNTTQQQQQQQ) are enriched in low complexity.

The protein belongs to the Toll-like receptor family. In terms of assembly, may interact (via the extracellular domain) with 18w (via the extracellular domain).

The protein resides in the cell membrane. It is found in the apical cell membrane. In terms of biological role, toll-related receptor. Probably specific to larval innate immunity. Involved in the tracheal immune response of larvae to Gram-negative and perhaps Gram-positive bacteria; upon infection it negatively regulates the immune deficiency (Imd) signaling cascade specifically in the respiratory epithelium to prevent the overexpression of antimicrobial peptides (AMP). Involved in the NF-kappa-B-dependent apoptosis of unfit cells during cell competition. Involved in neuron-specific glycosylation. Positively controls the neuromuscular junction (NMJ) growth in presynaptic motorneurons, probably via the JNK pathway. During development of the peripheral nervous system, may function in the NF-kappa-B (rel) regulatory cascade to repress expression of the neuron-specific genes sc and ase in non-neuronal cells. Promotes heterophilic cell adhesion with 18w in vitro. May have a minor role in leg development. May be involved in determining the proximal cell fate in the wing, possibly by negatively regulating the Dpp signaling pathway. May also be involved in the Dpp signaling pathway in the eye. Possibly functions with 18w and Toll-6 during convergent extension, to help direct proper planar cell polarity, cell intercalation and axis elongation. The protein is Toll-like receptor Tollo of Drosophila melanogaster (Fruit fly).